The following is a 219-amino-acid chain: MSGLSGPLSWPGPLLSALLFLFLLGPSSVLGISFHLPVNSRKCLREEIHKDLLVTGAYEITDQSGGAGGLRTHLKITDSAGHILYAKEDATKGKFAFTTEDYDMFEVCFESKGTGRIPDQLVILDMKHGVEAKNYEEIAKVEKLKPLEVELRRLEDLSESIVNDFAYMKKREEEMRDTNESTNTRVLYFSIFSMFCLIGLATWQVFYLRRFFKAKKLIE.

An N-terminal signal peptide occupies residues 1–31; sequence MSGLSGPLSWPGPLLSALLFLFLLGPSSVLG. Positions 1–142 are required for interaction with STX17; sequence MSGLSGPLSW…KNYEEIAKVE (142 aa). At 32–185 the chain is on the lumenal side; the sequence is ISFHLPVNSR…RDTNESTNTR (154 aa). Positions 41–193 constitute a GOLD domain; it reads RKCLREEIHK…TRVLYFSIFS (153 aa). Residues 147–178 form a required for TMED10 and TMED2 cis-Golgi network localization region; the sequence is LEVELRRLEDLSESIVNDFAYMKKREEEMRDT. Dimethylated arginine is present on residues arginine 171 and arginine 176. N-linked (GlcNAc...) asparagine glycosylation is present at asparagine 179. A helical transmembrane segment spans residues 186 to 206; it reads VLYFSIFSMFCLIGLATWQVF. The segment at 204-219 is interaction with COPG1; that stretch reads QVFYLRRFFKAKKLIE. The Cytoplasmic portion of the chain corresponds to 207–219; sequence YLRRFFKAKKLIE. The tract at residues 207-219 is interaction with ARF1 and IL1B; sequence YLRRFFKAKKLIE. Residues 211-212 carry the COPII vesicle coat-binding motif; sequence FF. Positions 211 to 219 match the COPI vesicle coat-binding motif; it reads FFKAKKLIE.

This sequence belongs to the EMP24/GP25L family. As to quaternary structure, predominantly dimeric and to a lesser extent monomeric in the ER. Monomer and dimer in ERGIC and cis-Golgi network. Forms homooligomer (via GOLD domain); the assembly is promoted by direct binding with leaderless cargos and may form a protein channel that facilitates cargo entry into the ERGIC. Forms heterooligomeric complexes with other members of the p24 family such as TMED2, TMED7 and TMED9. Interacts (via GOLD domain) with TMED2 (via GOLD domain); the complex is required for export of TMED10 from the ER to the cis-Golgi network; the complex is proposed to be involved in cis-Golgi network dynamics and / or biogenesis. Associates with the COPI vesicle coat subunits (coatomer). Tetramerization of the cytoplasmic domain at the Golgi membrane in vitro; the complex is proposed to interact with COPI coatomer and induce budding of the vesicles. Interacts with COPG1; the interaction involves TMED10 homodimer. Interacts with ARF1 (GDP-bound); the interaction probably involves a TMED10 oligomer. Interacts with SEC23A, SEC24B, SEC24C and SEC24D components of the coat protein complex II/COPII, indicative of an association of TMED10 with the COPII vesicle coat. Interacts with CD59. Interacts with MPPE1/PGAP5; the complex might recruit and sort GPI-anchored proteins to the ER-exit site, or the interaction might lead to recycling of PGAP5 between the ER and the Golgi. Interacts with F2LR1/PAR2. Interacts with KDELR2/ERD2; the interaction is disrupted by KDELR2 ligand. Found in a complex composed at least of SURF4, TMED2 and TMED10. Associates with the presenilin-dependent gamma-secretase complex. Interacts with STX17; the interaction is direct. Interacts with IL-1; the interaction is direct. Interacts with RAB21 (active GTP-bound form); the interaction is indirect and regulates TMED10 abundance and localization at the Golgi. As to expression, ubiquitous.

Its subcellular location is the endoplasmic reticulum membrane. The protein resides in the endoplasmic reticulum-Golgi intermediate compartment membrane. It is found in the golgi apparatus membrane. The protein localises to the golgi apparatus. It localises to the cis-Golgi network membrane. Its subcellular location is the trans-Golgi network membrane. The protein resides in the cytoplasmic vesicle. It is found in the secretory vesicle membrane. The protein localises to the cell membrane. It localises to the melanosome. Functionally, cargo receptor involved in protein vesicular trafficking and quality control in the endoplasmic reticulum (ER) and Golgi. The p24 protein family is a group of transmembrane proteins that bind coat protein complex I/COPI and coat protein complex II/COPII involved in vesicular trafficking between the membranes. Acts at the lumenal side for incorporation of secretory cargo molecules into transport vesicles and involved in vesicle coat formation at the cytoplasmic side. Mainly functions in the early secretory pathway and cycles between the ER, ER-Golgi intermediate compartment (ERGIC) and Golgi, mediating cargo transport through COPI and COPII-coated vesicles. In COPII vesicle-mediated anterograde transport, involved in the transport of GPI-anchored proteins by acting together with TMED2 as their cargo receptor; the function specifically implies SEC24C and SEC24D of the COPII vesicle coat and lipid raft-like microdomains of the ER. Recognizes GPI anchors structural remodeled in the ER by the GPI inositol-deacylase/PGAP1 and the metallophosphoesterase MPPE1/PGAP5. In COPI vesicle-mediated retrograde transport, involved in the biogenesis of COPI vesicles and vesicle coat recruitment. Involved in trafficking of amyloid beta A4 protein and soluble APP-beta release (independent from the modulation of gamma-secretase activity). Involved in the KDELR2-mediated retrograde transport of the toxin A subunit (CTX-A-K63)together with COPI and the COOH terminus of KDELR2. On Golgi membranes, acts as a primary receptor for ARF1-GDP, a GTP-binding protein involved in COPI-vesicle formation. Increases coatomer-dependent GTPase-activating activity of ARFGAP2 which mediates the hydrolysis of ARF1-bound GTP and therefore modulates protein trafficking from the Golgi apparatus. Involved in the exocytic trafficking of G protein-coupled receptors F2LR1/PAR2 (trypsin and tryspin-like enzyme receptor), OPRM1 (opioid receptor) and P2RY4 (UTD and UDP receptor) from the Golgi to the plasma membrane, thus contributing to receptor resensitization. In addition to its cargo receptor activity, may also act as a protein channel after oligomerization, facilitating the post-translational entry of leaderless cytoplasmic cargo into the ERGIC. Involved in the translocation into ERGIC, the vesicle entry and the secretion of leaderless cargos (lacking the secretion signal sequence), including the mature form of interleukin 1/IL-1 family members, the alpha-crystallin B chain HSPB5, the carbohydrate-binding proteins galectin-1/LGALS1 and galectin-3/LGALS3, the microtubule-associated protein Tau/MAPT, and the annexin A1/ANXA1; the translocation process is dependent on cargo protein unfolding and enhanced by chaperones HSP90AB1 and HSP90B1/GRP9. Could also associates with the presenilin-dependent gamma-secretase complex in order to regulate gamma-cleavages of the amyloid beta A4 protein to yield amyloid-beta 40/Abeta40. The polypeptide is Transmembrane emp24 domain-containing protein 10 (Rattus norvegicus (Rat)).